Reading from the N-terminus, the 241-residue chain is Small ribosomal subunit protein uS3 (241 aa).

A KH type-2 domain is found at 39 to 109 (VRNYVNKNLS…PIRINVVEVA (71 aa)). The tract at residues 213 to 241 (ADEQPTNREPQQRRRQQQRRRQQFEDRSE) is disordered.

It belongs to the universal ribosomal protein uS3 family. In terms of assembly, part of the 30S ribosomal subunit. Forms a tight complex with proteins S10 and S14.

Its function is as follows. Binds the lower part of the 30S subunit head. Binds mRNA in the 70S ribosome, positioning it for translation. This Acaryochloris marina (strain MBIC 11017) protein is Small ribosomal subunit protein uS3.